Here is a 1093-residue protein sequence, read N- to C-terminus: Leukemia inhibitory factor receptor (1093 aa).

The signal sequence occupies residues 1–43 (MGAFSWWRQPSWMADNKRGRMTPSLPWLLSALTLLHLMMHVNG). Residues 44–829 (LKRGVQQDLK…SMFVVTKENS (786 aa)) are Extracellular-facing. Residues 45-127 (KRGVQQDLKC…QSKFTLNEKD (83 aa)) form the Fibronectin type-III 1 domain. 2 disulfide bridges follow: C54–C64 and C81–C89. Residues N165, N200, N239, and N262 are each glycosylated (N-linked (GlcNAc...) asparagine). Disulfide bonds link C209–C266 and C337–C347. 5 Fibronectin type-III domains span residues 331–428 (VPQK…ERVA), 431–530 (VPIS…TEAT), 534–625 (GPDT…IPND), 623–715 (PNDD…IGYI), and 720–829 (PIVA…KENS). N-linked (GlcNAc...) asparagine glycans are attached at residues N386, N403, N422, N441, N454, and N477. The cysteines at positions 462 and 507 are disulfide-linked. Residues 515–519 (WSKWS) carry the WSXWS motif motif. N568, N648, N659, N676, N725, and N783 each carry an N-linked (GlcNAc...) asparagine glycan. A helical membrane pass occupies residues 830–850 (VGLIIAILIPVAVAVIVGVVT). At 851–1093 (SILCYRKREW…TNFFQNKPND (243 aa)) the chain is on the cytoplasmic side. The Box 1 motif motif lies at 865-873 (FYPDIPNPE). Disordered regions lie at residues 908-941 (ESRS…ENQA) and 1003-1093 (LPIN…KPND). Residues S923 and S1040 each carry the phosphoserine modification. Polar residues-rich tracts occupy residues 1028–1063 (ANVN…NSRQ) and 1082–1093 (SFTNFFQNKPND).

The protein belongs to the type I cytokine receptor family. Type 2 subfamily. In terms of assembly, heterodimer composed of LIFR and IL6ST. The heterodimer formed by LIFR and IL6ST interacts with the complex formed by CNTF and CNTFR.

It localises to the cell membrane. Signal-transducing molecule. May have a common pathway with IL6ST. The soluble form inhibits the biological activity of LIF by blocking its binding to receptors on target cells. The chain is Leukemia inhibitory factor receptor (Lifr) from Rattus norvegicus (Rat).